Here is a 452-residue protein sequence, read N- to C-terminus: Pup--protein ligase (452 aa).

Glu9 contacts Mg(2+). An ATP-binding site is contributed by Arg53. Residue Tyr55 participates in Mg(2+) binding. Residue Asp57 is the Proton acceptor of the active site. Glu63 provides a ligand contact to Mg(2+). Residues Thr66 and Trp419 each contribute to the ATP site.

Belongs to the Pup ligase/Pup deamidase family. Pup-conjugating enzyme subfamily.

It catalyses the reaction ATP + [prokaryotic ubiquitin-like protein]-L-glutamate + [protein]-L-lysine = ADP + phosphate + N(6)-([prokaryotic ubiquitin-like protein]-gamma-L-glutamyl)-[protein]-L-lysine.. It participates in protein degradation; proteasomal Pup-dependent pathway. It functions in the pathway protein modification; protein pupylation. Catalyzes the covalent attachment of the prokaryotic ubiquitin-like protein modifier Pup to the proteasomal substrate proteins, thereby targeting them for proteasomal degradation. This tagging system is termed pupylation. The ligation reaction involves the side-chain carboxylate of the C-terminal glutamate of Pup and the side-chain amino group of a substrate lysine. The sequence is that of Pup--protein ligase from Mycobacterium avium (strain 104).